A 575-amino-acid chain; its full sequence is Alpha-(1,6)-fucosyltransferase (575 aa).

The Cytoplasmic segment spans residues 1-9 (MRPWTGSWR). A helical; Signal-anchor for type II membrane protein membrane pass occupies residues 10 to 30 (WIMLILFAWGTLLFYIGGHLV). Over 31–575 (RDNDHPDHSS…KYPTYPEAEK (545 aa)) the chain is Lumenal. 3 disulfides stabilise this stretch: Cys204/Cys266, Cys212/Cys230, and Cys218/Cys222. The GT23 domain maps to 206–493 (KAKKLVCNIN…PDASANFHSL (288 aa)). Ser278 is modified (phosphoserine). Positions 299–305 (PRPPYLP) match the SH3-binding motif. An important for donor substrate binding region spans residues 365–366 (RR). A disulfide bridge connects residues Cys465 and Cys472. The 62-residue stretch at 502–563 (QNAHNQIAIY…PSYKVREKIE (62 aa)) folds into the SH3 domain.

The protein belongs to the glycosyltransferase 23 family. Post-translationally, tyrosine phosphorylated by PKDCC/VLK.

The protein localises to the golgi apparatus. It localises to the golgi stack membrane. The catalysed reaction is N(4)-{beta-D-GlcNAc-(1-&gt;2)-alpha-D-Man-(1-&gt;3)-[beta-D-GlcNAc-(1-&gt;2)-alpha-D-Man-(1-&gt;6)]-beta-D-Man-(1-&gt;4)-beta-D-GlcNAc-(1-&gt;4)-beta-D-GlcNAc}-L-asparaginyl-[protein] + GDP-beta-L-fucose = an N(4)-{beta-D-GlcNAc-(1-&gt;2)-alpha-D-Man-(1-&gt;3)-[beta-D-GlcNAc-(1-&gt;2)-alpha-D-Man-(1-&gt;6)]-beta-D-Man-(1-&gt;4)-beta-D-GlcNAc-(1-&gt;4)-[alpha-L-Fuc-(1-&gt;6)]-beta-D-GlcNAc}-L-asparaginyl-[protein] + GDP + H(+). It functions in the pathway protein modification; protein glycosylation. Its function is as follows. Catalyzes the addition of fucose in alpha 1-6 linkage to the first GlcNAc residue, next to the peptide chains in N-glycans. The polypeptide is Alpha-(1,6)-fucosyltransferase (FUT8) (Canis lupus familiaris (Dog)).